Consider the following 455-residue polypeptide: GTPase Der (455 aa).

EngA-type G domains follow at residues 4 to 169 and 178 to 353; these read PIVA…PPKH and IQMA…EQHR. GTP contacts are provided by residues 10–17, 57–61, 120–123, 184–191, 231–235, and 296–299; these read GRPNVGKS, DTGGL, NKCE, DTAGI, and NKWD. Residues 354-439 form the KH-like domain; sequence RRVSTSVVNE…PLKLFWRGKQ (86 aa).

Belongs to the TRAFAC class TrmE-Era-EngA-EngB-Septin-like GTPase superfamily. EngA (Der) GTPase family. As to quaternary structure, associates with the 50S ribosomal subunit.

Functionally, GTPase that plays an essential role in the late steps of ribosome biogenesis. This is GTPase Der from Prochlorococcus marinus (strain MIT 9313).